We begin with the raw amino-acid sequence, 144 residues long: UPF0735 ACT domain-containing protein LSEI_1046 (144 aa).

The ACT domain occupies 68–143 (VISLMLHHDR…GVSDVHLVSV (76 aa)).

This sequence belongs to the UPF0735 family.

The protein is UPF0735 ACT domain-containing protein LSEI_1046 of Lacticaseibacillus paracasei (strain ATCC 334 / BCRC 17002 / CCUG 31169 / CIP 107868 / KCTC 3260 / NRRL B-441) (Lactobacillus paracasei).